We begin with the raw amino-acid sequence, 424 residues long: L-glutamine:scyllo-inosose aminotransferase (424 aa).

A disordered region spans residues methionine 1–tryptophan 21. At lysine 202 the chain carries N6-(pyridoxal phosphate)lysine.

This sequence belongs to the DegT/DnrJ/EryC1 family. L-glutamine:2-deoxy-scyllo-inosose/scyllo-inosose aminotransferase subfamily. Homodimer. Pyridoxal 5'-phosphate serves as cofactor.

The catalysed reaction is scyllo-inosose + L-glutamine = 1-amino-1-deoxy-scyllo-inositol + 2-oxoglutaramate. The protein operates within antibiotic biosynthesis; streptomycin biosynthesis. Its function is as follows. Catalyzes the PLP-dependent transamination of scyllo-inosose to form scyllo-inosamine. The sequence is that of L-glutamine:scyllo-inosose aminotransferase (stsC) from Streptomyces griseus.